A 275-amino-acid chain; its full sequence is MSACGRKALTLLSSVFAVCGLGLLGIAVSTDYWLYLEEGIILPQNQSTEVKMSLHSGLWRVCFLAGEERGRCFTIEYVMPMNSQMTSESTVNVLKMIRSATPFPLVSLFFMFIGFILSNIGHIRPHRTILAFVSGIFFILSGLSLVVGLVLYISSINDEMLNRTKDAETYFNYKYGWSFAFAAISFLLTESAGVMSVYLFMKRYTAEDMYRPHPGFYRPRLSNCSDYSGQFLHPDAWIRGRSPSDISSDASLQMNSNYPALLKCPDYDQMSSSPC.

Transmembrane regions (helical) follow at residues 8–28 (ALTLLSSVFAVCGLGLLGIAV), 103–123 (FPLVSLFFMFIGFILSNIGHI), 129–149 (ILAFVSGIFFILSGLSLVVGL), and 181–201 (FAAISFLLTESAGVMSVYLFM).

The protein belongs to the PMP-22/EMP/MP20 family. CACNG subfamily. As to quaternary structure, the L-type calcium channel is composed of five subunits: alpha-1, alpha-2/delta, beta and gamma. Acts as an auxiliary subunit for AMPA-selective glutamate receptors (AMPARs). Found in a complex with GRIA1, GRIA2, GRIA3, GRIA4, CNIH2, CNIH3, CACNG2, CACNG3, CACNG4, CACNG7 and CACNG8. Interacts with GRIA1, GRIA2, GRIA3 and GRIA4. Brain. Enriched in Bergman glia, as well as a variety of neuronal populations including locus coeruleus, olfactory bulb, lateral septal nucleus, interpeduncular nucleus, and the CA2 and rostral/medial CA1 regions of hippocampus.

It localises to the membrane. It is found in the postsynaptic density membrane. Its function is as follows. Regulates the gating properties of AMPA-selective glutamate receptors (AMPARs). Modulates their gating properties by accelerating their rates of activation, deactivation and desensitization. Displays subunit-specific AMPA receptor regulation. Shows specificity for GRIA1, GRIA4 and the long isoform of GRIA2. Thought to stabilize the calcium channel in an inactivated (closed) state. The chain is Voltage-dependent calcium channel gamma-5 subunit (Cacng5) from Mus musculus (Mouse).